The following is a 158-amino-acid chain: C-type lectin lectoxin-Enh4 (158 aa).

A signal peptide spans 1-23 (MGQFTVVSLGLLAMFLSLSGAKG). Disulfide bonds link Cys-26–Cys-37, Cys-54–Cys-154, and Cys-129–Cys-146. In terms of domain architecture, C-type lectin spans 33–155 (RNGVCNKLFP…CASLHPFICQ (123 aa)). Residues 119-121 (EPN) carry the Mannose-binding motif. Glu-127, Asn-142, and Asp-143 together coordinate Ca(2+).

The protein belongs to the true venom lectin family. As to expression, expressed by the venom gland.

The protein localises to the secreted. Its function is as follows. Mannose-binding lectin which recognizes specific carbohydrate structures and agglutinates a variety of animal cells by binding to cell-surface glycoproteins and glycolipids. May be a calcium-dependent lectin. The polypeptide is C-type lectin lectoxin-Enh4 (Pseudoferania polylepis (Macleay's water snake)).